Consider the following 134-residue polypeptide: Fluoride-specific ion channel FluC (134 aa).

Helical transmembrane passes span 7–27 (LAVA…TIMA), 38–58 (GTLL…IVLV), 69–89 (LFLF…AAES), and 110–130 (VGSL…LLGH). Residues Gly-77 and Thr-80 each coordinate Na(+).

Belongs to the fluoride channel Fluc/FEX (TC 1.A.43) family.

The protein resides in the cell inner membrane. It catalyses the reaction fluoride(in) = fluoride(out). With respect to regulation, na(+) is not transported, but it plays an essential structural role and its presence is essential for fluoride channel function. Its function is as follows. Fluoride-specific ion channel. Important for reducing fluoride concentration in the cell, thus reducing its toxicity. This Legionella pneumophila (strain Lens) protein is Fluoride-specific ion channel FluC.